A 2602-amino-acid chain; its full sequence is MPVTEKDLAEDAPWKKIQQNTFTRWCNEHLKCVNKRIGNLQTDLSDGLRLIALLEVLSQKRMHHKYHQRPTFRQMKLENVSVALEFLDHESIKLVSIDSKAIVDGNLKLILGLVWTLILHYSISMPVWEDEGDDDAKKQTPKQRLLGWIQNKIPYLPITNFNQNWQDGKALGALVDSCAPGLCPDWESWDPRKPVDNAREAMQQADDWLGVPQVITPEEIIHPDVDEHSVMTYLSQFPKAKLKPGAPLKPKLNPKKARAYGRGIEPTGNMVKQPAKFTVDTISAGQGDVMVFVEDPEGNKEEARVTPDSDKNKTYSVEYLPKVTGLHKVIVLFAGQHISKSPFEVNVDKAQGDASKVTAKGPGLETTGNIANKPTYFDIYTAGAGVGDIGIEVEDPQGKNSVELLVEDRGNQVYRCVYKPVQPGPHVVKVSFAGDAIPKSPFGVQIGEACNPNACRASGRGLQPKGVRIRETADFKVDTKAAGSGELGVTVKGPKGLEELVKQKGFLDGVYSFEYYPSTPGKYSVAVTWGGHHIPKSPFEVQVGPEAGMQKVRAWGPGLHGGIVGRSADFVVESIGSEVGTLGFAIEGPSQAKIEYDDQNDGSCDVKYWPKEPGEYAVHIMCDDEDIKDSPYMAFIHPATGDYNPDLVQAYGPGLEKSGCTINNPAEFIVDPKDAGSAPLKILAQDGEGQPIDIQMKSRMDGTYACSYTPLKAIKHTIAVVWGGVNIPHSPYRVNIGQGSHPQKVKVFGPGVERSGLKANEPTHFTVDCTEAGEGDVSVGIKCDARVLSDDEEDVDFDIIHNANDTFTVKYVPPAPGRYTIKVLFASQEIPASPFRVKVDPSHDASKVKAEGPGLSKAGVENGKPTHFTVHTKGAGKAPLNVQFSSPLPGEAVKDLDIIDNYDYSHTVKYTPTQQGNMQVLVTYGGDPIPKSPFTVGVAAPLDLSKIKINGLENRVEVGKDQEFAIDTNGAGGQGKLDVTILSPSRKVVPCLVAPVAGRECSTAKFIPREEGLFAVDVTYDGHPVPGSPYTVEASLPPDPTKVKAHGPGLEGGLVGKPAEFTIDTKGAGTGGLGLTVEGPCEAKIECSDNGDGTCSVSYLPTKPGEYFVNILFEEVHIPGSPFKADIEMPFDPSKVVASGPGLEHGKVGEPGILCVDCSEAGPGTLGLEAVSDSGAKAEVSIQNNKDGTYAVTYVPLTAGMYTLTMKYGGELVPHFPAWVKVEPAIDTSGIKAFGPGIEGKDVFREATTDFTVDSRPLTQVGGDHIKAQITNPSGASTECFVKDNADGTYQVEYTPFEKGFHVVEVTYDDVPIPNSPFKVAVTEGCQPSRVHAQGPGLKEAFTNKSNVFTVVTRGAGIGGLGITVEGPSESKINCRDNKDGSCSAEYIPFAPGDYDVNITYGGVHIPGSPFRVPSKDVVDPSKVKIAGPGLSSCVRACIPQSFTVDSSKAGLAPLEVRVLGPRGLVEPVNVVDNGDGTHTVTYTPSQEGPYIVSVKYADEEIPRSPFKVKVLPTYDASKVTASGPGLSAYGVPASLPVEFAIDARDAGEGLLAVQITDQEGKPQRATVHDNKDGTYAVTYIPDKTGRYMIGVTYGGDNIPLSPYRIRATQTGDASKCLATGPGIAPTVKTGEEVGFVVDAKTAGKGKVTCVILTPDGTEAEADVIENEDGTYDIFYTAAKPGTYVIYVRFGGVDIPNSPFTVMATDGEVTAMEEAPVNACPPGFRPWVTEEAYVPVSDMNGLGFKPFDLVIPFAVRKGEITGTVHMPSGKKATPEIVDNKDGTVTVRYAPTEVGLHEMHIKYRGSHIPESPLQFYVNYPNSGSVSAYGPGLVYGVANKTATFTIVTEDAGEGGLDLAIEGPSKAEISCIDNKDGTCTVTYLPTLPGDYSILVKYNDKHIPGSPFTAKITDDNRRCSQVKLGSAADFLLDISETDLSTLTASIKAPSGRDEPCLLKRLPNNHIGISFIPREVGEHLVSIKKNGNHVANSPVSIMVVQSEIGDARRAKVYGQGLSEGRTFEMSDFIVDTRDAGYGGISLAVEGPSKVDIQTEDLEDGTCKVSYFPTVPGVYIVSTKFADEHVPGSPFTVKISGEGRVRESITRTSRAPAVATVGSICDLNLKIPEINSSDMSAHVTSPSGHVTEAEIVPMGKNSHCVRFVPQEMGVHTVSVKYRGQHVTGSPFQFTVGPLGEGGAHKVRAGGPGLERGEAGIPAEFSIWTREAGAGGLSIAVEGPSKAEITFDDHKNGSCGVSYIAQEPGNYEVSIKFNDEHIPDSPYLVPVIAPSDDARCLTVLSLQESGLKVNQPASFAIRLNGAKGKIDAKVHSPSGAVEECHVSELEPDKYAVRFIPHENGIHTIDVKFNGSHVVGSPFKVRVGEPGQAGNPALVSAYGAGLETGTTGIQSEFFINTTQAGPGTLSVTIEGPSKVKMDCQEIPEGYKVMYTPMAPGNYLIGVKYGGPNHISRSPFKAKVTGQRLVSPGSANETSSILVESVTRSSTETCYSAIPKSSSDASKVTSKGAGLSKAFVGQKSSFLVDCSKAGSNMLLIGVHGPTTPCEEVSMKHVGKQQYNVTYVVKERGDYVLAVKWGEEHIPGSPFHVTVP.

An actin-binding region spans residues 1 to 239 (MPVTEKDLAE…VMTYLSQFPK (239 aa)). Calponin-homology (CH) domains lie at 16–122 (KIQQ…LHYS) and 139–242 (QTPK…KAKL). Threonine 216 is modified (phosphothreonine). The disordered stretch occupies residues 244–267 (PGAPLKPKLNPKKARAYGRGIEPT). Filamin repeat units lie at residues 249–347 (KPKL…EVNV), 349–446 (KAQG…GVQI), 447–543 (GEAC…EVQV), 544–636 (GPEA…MAFI), 640–736 (TGDY…RVNI), 737–839 (GQGS…RVKV), 840–938 (DPSH…TVGV), 939–1034 (AAPL…TVEA), 1035–1127 (SLPP…KADI), 1128–1222 (EMPF…WVKV), 1223–1322 (EPAI…KVAV), 1323–1415 (TEGC…RVPS), 1416–1511 (KDVV…KVKV), 1512–1608 (LPTY…RIRA), and 1609–1704 (TQTG…TVMA). Threonine 519 is modified (phosphothreonine). Lysine 681 is subject to N6-acetyllysine. Phosphoserine is present on serine 730. A compositionally biased stretch (basic and acidic residues) spans 837–850 (VKVDPSHDASKVKA). The interval 837-862 (VKVDPSHDASKVKAEGPGLSKAGVEN) is disordered. Serine 886, serine 932, serine 983, and serine 1028 each carry phosphoserine. Position 1307 is a phosphothreonine (threonine 1307). Serine 1316 is subject to Phosphoserine. Residues serine 1433, serine 1505, and serine 1602 each carry the phosphoserine modification. Residues 1705 to 1728 (TDGEVTAMEEAPVNACPPGFRPWV) form a hinge 1 region. Filamin repeat units lie at residues 1729 to 1813 (TEEA…SPLQ), 1816 to 1908 (VNYP…TAKI), 1919 to 1994 (KLGS…SIMV), 1997 to 2089 (SEIG…TVKI), 2091 to 2185 (GEGR…QFTV), 2188 to 2280 (LGEG…LVPV), 2282 to 2375 (APSD…KVRV), and 2379 to 2471 (GQAG…KAKV). Lysine 1780 is subject to N6-acetyllysine. Residues serine 2083 and serine 2113 each carry the phosphoserine modification. A phosphoserine mark is found at serine 2369 and serine 2465. Residue lysine 2468 forms a Glycyl lysine isopeptide (Lys-Gly) (interchain with G-Cter in ISG15) linkage. The segment at 2472 to 2506 (TGQRLVSPGSANETSSILVESVTRSSTETCYSAIP) is hinge 2. The tract at residues 2472–2602 (TGQRLVSPGS…PGSPFHVTVP (131 aa)) is self-association site, tail. Serine 2478, serine 2481, and serine 2492 each carry phosphoserine. A Filamin 24 repeat occupies 2507-2601 (KSSSDASKVT…IPGSPFHVTV (95 aa)). N6-succinyllysine is present on residues lysine 2518 and lysine 2524. Lysine 2576 carries the N6-acetyllysine modification.

Belongs to the filamin family. Homodimer. Interacts with FLNA, FLNC, INPPL1, ITGB1A, ITGB1D, ITGB3, ITGB6, MYOT, MYOZ1, PSEN1 and PSEN2. Interacts with MICALL2. Interacts with RFLNA and RFLNB. Interacts with ASB2 isoform 1; the interaction targets FLNB for proteasomal degradation. In terms of processing, ISGylation prevents ability to interact with the upstream activators of the JNK cascade and inhibits IFNA-induced JNK signaling. Post-translationally, ubiquitination by a SCF-like complex containing ASB2 isoform 1 leads to proteasomal degradation which promotes muscle differentiation. Expressed in hippocampus, cortex, cerebellar Purkinje cells and granule cell layers.

It localises to the cytoplasm. Its subcellular location is the cell cortex. The protein localises to the cytoskeleton. The protein resides in the stress fiber. It is found in the myofibril. It localises to the sarcomere. Its subcellular location is the z line. Connects cell membrane constituents to the actin cytoskeleton. May promote orthogonal branching of actin filaments and links actin filaments to membrane glycoproteins. Anchors various transmembrane proteins to the actin cytoskeleton. The protein is Filamin-B (Flnb) of Mus musculus (Mouse).